The sequence spans 212 residues: Pyridoxine/pyridoxamine 5'-phosphate oxidase (212 aa).

Substrate-binding positions include 8 to 11 and Lys66; that span reads RREY. FMN is bound by residues 61-66, 76-77, Arg82, Lys83, and Gln105; these read RIVLLK and FT. Substrate contacts are provided by Tyr123, Arg127, and Ser131. Residues 140–141 and Trp185 each bind FMN; that span reads QS. Position 191-193 (191-193) interacts with substrate; it reads RLH. Position 195 (Arg195) interacts with FMN.

It belongs to the pyridoxamine 5'-phosphate oxidase family. As to quaternary structure, homodimer. FMN is required as a cofactor.

It catalyses the reaction pyridoxamine 5'-phosphate + O2 + H2O = pyridoxal 5'-phosphate + H2O2 + NH4(+). The enzyme catalyses pyridoxine 5'-phosphate + O2 = pyridoxal 5'-phosphate + H2O2. It participates in cofactor metabolism; pyridoxal 5'-phosphate salvage; pyridoxal 5'-phosphate from pyridoxamine 5'-phosphate: step 1/1. It functions in the pathway cofactor metabolism; pyridoxal 5'-phosphate salvage; pyridoxal 5'-phosphate from pyridoxine 5'-phosphate: step 1/1. Functionally, catalyzes the oxidation of either pyridoxine 5'-phosphate (PNP) or pyridoxamine 5'-phosphate (PMP) into pyridoxal 5'-phosphate (PLP). This is Pyridoxine/pyridoxamine 5'-phosphate oxidase from Shewanella baltica (strain OS223).